Reading from the N-terminus, the 95-residue chain is Co-chaperonin GroES (95 aa).

It belongs to the GroES chaperonin family. As to quaternary structure, heptamer of 7 subunits arranged in a ring. Interacts with the chaperonin GroEL.

Its subcellular location is the cytoplasm. Functionally, together with the chaperonin GroEL, plays an essential role in assisting protein folding. The GroEL-GroES system forms a nano-cage that allows encapsulation of the non-native substrate proteins and provides a physical environment optimized to promote and accelerate protein folding. GroES binds to the apical surface of the GroEL ring, thereby capping the opening of the GroEL channel. The sequence is that of Co-chaperonin GroES from Glaesserella parasuis serovar 5 (strain SH0165) (Haemophilus parasuis).